The sequence spans 202 residues: Adenylyl-sulfate kinase (202 aa).

31–38 (GLSASGKS) lines the ATP pocket. Catalysis depends on serine 105, which acts as the Phosphoserine intermediate.

Belongs to the APS kinase family.

The catalysed reaction is adenosine 5'-phosphosulfate + ATP = 3'-phosphoadenylyl sulfate + ADP + H(+). It participates in sulfur metabolism; hydrogen sulfide biosynthesis; sulfite from sulfate: step 2/3. Catalyzes the synthesis of activated sulfate. The protein is Adenylyl-sulfate kinase (MET14) of Saccharomyces bayanus (Yeast).